The chain runs to 192 residues: Epoxyqueuosine reductase QueH (192 aa).

Residues C9, C10, C87, and C90 each coordinate [4Fe-4S] cluster. C169 and C171 are disulfide-bonded.

The protein belongs to the QueH family.

It carries out the reaction epoxyqueuosine(34) in tRNA + AH2 = queuosine(34) in tRNA + A + H2O. The protein operates within tRNA modification; tRNA-queuosine biosynthesis. Functionally, catalyzes the conversion of epoxyqueuosine (oQ) to queuosine (Q), which is a hypermodified base found in the wobble positions of tRNA(Asp), tRNA(Asn), tRNA(His) and tRNA(Tyr). This chain is Epoxyqueuosine reductase QueH, found in Thermotoga maritima (strain ATCC 43589 / DSM 3109 / JCM 10099 / NBRC 100826 / MSB8).